The sequence spans 358 residues: Chitin synthase export chaperone (358 aa).

Helical transmembrane passes span 49-69 (IIFQ…TVVM), 88-108 (FFYL…GVIP), 117-137 (FVAV…INGF), 159-179 (FVAF…WAGL), 185-205 (VGIF…YVVM), 220-240 (LGDI…LYAF), and 250-270 (HYLD…MMVY). The tract at residues 321-358 (ASGPGTGSGASASGYEGGHHRRESHGYTPSPNRQSLRY) is disordered. Polar residues predominate over residues 347–358 (YTPSPNRQSLRY).

This sequence belongs to the CHS7 family. Interacts with chs-3.

The protein localises to the endoplasmic reticulum membrane. Chaperone required for the export of the chitin synthase chs-3 from the endoplasmic reticulum. The protein is Chitin synthase export chaperone (csc-1) of Neurospora crassa (strain ATCC 24698 / 74-OR23-1A / CBS 708.71 / DSM 1257 / FGSC 987).